The following is a 104-amino-acid chain: UPF0145 protein cbdbA1711 (104 aa).

It belongs to the UPF0145 family.

This is UPF0145 protein cbdbA1711 from Dehalococcoides mccartyi (strain CBDB1).